The chain runs to 933 residues: Progesterone receptor (933 aa).

Residues 1–157 are disordered; it reads MTELKAKGPR…PEDPPAAPAT (157 aa). Residues 1-164 are AF3; mediates transcriptional activation (in isoform B); sequence MTELKAKGPR…PATQRVLSPL (164 aa). Positions 1–566 are modulating, Pro-Rich; that stretch reads MTELKAKGPR…YSFESLPQKI (566 aa). Lys7 is covalently cross-linked (Glycyl lysine isopeptide (Lys-Gly) (interchain with G-Cter in SUMO)). A Phosphoserine modification is found at Ser20. Positions 55–59 match the LXXL motif 1 motif; sequence LDGLL. Phosphoserine occurs at positions 81 and 102. Residues 115–119 carry the LXXL motif 2 motif; the sequence is LDTLL. Ser130 and Ser162 each carry phosphoserine. Positions 165–305 are mediates transcriptional transrepression (in isoform A); the sequence is MSRSGCKVGD…LATTVMDFIH (141 aa). The short motif at 183–187 is the Nuclear localization signal element; the sequence is KVLPR. Phosphoserine is present on residues Ser190 and Ser213. A disordered region spans residues 195–241; it reads LLLPASESPHWSGAPVKPSPQAAAVEVEEEDGSESEESAGPLLKGKP. The span at 220–231 shows a compositional bias: acidic residues; sequence EVEEEDGSESEE. Residues 232–241 are compositionally biased toward low complexity; it reads SAGPLLKGKP. Ser294 is modified (phosphoserine; by MAPK1). The segment at 331 to 351 is disordered; sequence GGAGAASAFAPPRSSPCASST. Low complexity predominate over residues 335-350; the sequence is AASAFAPPRSSPCASS. Ser345 carries the phosphoserine; by MAPK modification. Lys388 participates in a covalent cross-link: Glycyl lysine isopeptide (Lys-Gly) (interchain with G-Cter in SUMO); alternate. Residue Lys388 forms a Glycyl lysine isopeptide (Lys-Gly) (interchain with G-Cter in ubiquitin); alternate linkage. Ser400 carries the post-translational modification Phosphoserine; by CDK2. Positions 415–452 are disordered; it reads PDFPLGPPPPLPPRATPSRPGEAAVTAAPASASVSSAS. Pro residues predominate over residues 418–429; that stretch reads PLGPPPPLPPRA. The segment covering 430 to 452 has biased composition (low complexity); the sequence is TPSRPGEAAVTAAPASASVSSAS. The AF1; mediates transcriptional activation stretch occupies residues 456–546; the sequence is STLECILYKA…VYPPYLNYLR (91 aa). Residue Lys531 forms a Glycyl lysine isopeptide (Lys-Gly) (interchain with G-Cter in SUMO) linkage. 2 NR C4-type zinc fingers span residues 567-587 and 603-627; these read CLIC…CGSC and CAGR…LRKC. The segment at residues 567–639 is a DNA-binding region (nuclear receptor); sequence CLICGDEASG…AGMVLGGRKF (73 aa). Phosphoserine is present on Ser676. The NR LBD domain maps to 679–913; sequence QDIQLIPPLI…EFPEMMSEVI (235 aa). The AF2; mediates transcriptional activation stretch occupies residues 687-933; that stretch reads LINLLMSIEP…MVKPLLFHKK (247 aa). Arg766 serves as a coordination point for progesterone.

It belongs to the nuclear hormone receptor family. NR3 subfamily. As to quaternary structure, interacts with SMARD1 and UNC45A. Interacts with CUEDC2; the interaction promotes ubiquitination, decreases sumoylation, and represses transcriptional activity. Interacts with PIAS3; the interaction promotes sumoylation of PR in a hormone-dependent manner, inhibits DNA-binding, and alters nuclear export. Interacts with SP1; the interaction requires ligand-induced phosphorylation on Ser-345 by ERK1/2 MAPK. Interacts with PRMT2. Isoform A interacts with NCOR2. Isoform B (but not isoform A) interacts with NCOA2 and NCOA1. Isoform B (but not isoform A) interacts with KLF9. Interacts with GTF2B. In terms of processing, phosphorylated on multiple serine sites. Several of these sites are hormone-dependent. Phosphorylation on Ser-294 occurs preferentially on isoform B, is highly hormone-dependent and modulates ubiquitination and sumoylation on Lys-388. Phosphorylation on Ser-102 and Ser-345 also requires induction by hormone. Basal phosphorylation on Ser-81, Ser-162, Ser-190 and Ser-400 is increased in response to progesterone and can be phosphorylated in vitro by the CDK2-A1 complex. Increased levels of phosphorylation on Ser-400 also in the presence of EGF, heregulin, IGF, PMA and FBS. Phosphorylation at this site by CDK2 is ligand-independent, and increases nuclear translocation and transcriptional activity. Phosphorylation at Ser-162 and Ser-294, but not at Ser-190, is impaired during the G(2)/M phase of the cell cycle. Phosphorylation on Ser-345 by ERK1/2 MAPK is required for interaction with SP1. Post-translationally, sumoylation is hormone-dependent and represses transcriptional activity. Sumoylation on all three sites is enhanced by PIAS3. Desumoylated by SENP1. Sumoylation on Lys-388, the main site of sumoylation, is repressed by ubiquitination on the same site, and modulated by phosphorylation at Ser-294. Ubiquitination is hormone-dependent and represses sumoylation on the same site. Promoted by MAPK-mediated phosphorylation on Ser-294. Ubiquitinated by UBR5, leading to its degradation: UBR5 specifically recognizes and binds ligand-bound PGR when it is not associated with coactivators (NCOAs). In presence of NCOAs, the UBR5-degron is not accessible, preventing its ubiquitination and degradation. In terms of processing, palmitoylated by ZDHHC7 and ZDHHC21. Palmitoylation is required for plasma membrane targeting and for rapid intracellular signaling via ERK and AKT kinases and cAMP generation. As to expression, in reproductive tissues the expression of isoform A and isoform B varies as a consequence of developmental and hormonal status. Isoform A and isoform B are expressed in comparable levels in uterine glandular epithelium during the proliferative phase of the menstrual cycle. Expression of isoform B but not of isoform A persists in the glands during mid-secretory phase. In the stroma, isoform A is the predominant form throughout the cycle. Heterogeneous isoform expression between the glands of the endometrium basalis and functionalis is implying region-specific responses to hormonal stimuli.

It is found in the nucleus. The protein localises to the cytoplasm. Its subcellular location is the mitochondrion outer membrane. In terms of biological role, the steroid hormones and their receptors are involved in the regulation of eukaryotic gene expression and affect cellular proliferation and differentiation in target tissues. Depending on the isoform, progesterone receptor functions as a transcriptional activator or repressor. Its function is as follows. Ligand-dependent transdominant repressor of steroid hormone receptor transcriptional activity including repression of its isoform B, MR and ER. Transrepressional activity may involve recruitment of corepressor NCOR2. Transcriptional activator of several progesteron-dependent promoters in a variety of cell types. Involved in activation of SRC-dependent MAPK signaling on hormone stimulation. Functionally, increases mitochondrial membrane potential and cellular respiration upon stimulation by progesterone. The sequence is that of Progesterone receptor (PGR) from Homo sapiens (Human).